A 524-amino-acid chain; its full sequence is Caffeate CoA-transferase (524 aa).

Residue glutamate 323 is the 5-glutamyl coenzyme A thioester intermediate of the active site.

It belongs to the 3-oxoacid CoA-transferase family. As to quaternary structure, homodimer.

It catalyses the reaction hydrocaffeoyl-CoA + (E)-caffeate = 3-(3,4-dihydroxyphenyl)propanoate + (E)-caffeoyl-CoA. Its function is as follows. Involved in caffeate respiration, which consists in the reduction of the C-C double bond of caffeate. CarA catalyzes an energy-saving CoA loop for caffeate activation in the steady state of caffeate respiration. It catalyzes the formation of caffeyl-CoA from caffeate with hydrocaffeyl-CoA as the CoA donor via a ping-pong mechanism. In addition to caffeate, the enzyme can utilize 4-coumarate or ferulate as CoA acceptor. Neither acetyl-CoA nor butyryl-CoA served as the CoA donor. This Acetobacterium woodii protein is Caffeate CoA-transferase.